Consider the following 193-residue polypeptide: Bcl-2-like protein 2 (193 aa).

Residue A2 is modified to N-acetylalanine. The BH4 signature appears at D9–C29. The BH1 motif lies at E85–A104. A BH2 motif is present at residues D136–Y151.

Belongs to the Bcl-2 family. In terms of assembly, interacts with HIF3A isoform 2 (via C-terminus domain). Interacts with BOP. Expressed in almost all myeloid cell lines and in a wide range of tissues, with highest levels in brain, colon, and salivary gland.

The protein localises to the mitochondrion membrane. In terms of biological role, promotes cell survival. Blocks dexamethasone-induced apoptosis. Mediates survival of postmitotic Sertoli cells by suppressing death-promoting activity of BAX. The protein is Bcl-2-like protein 2 (Bcl2l2) of Mus musculus (Mouse).